The chain runs to 290 residues: Alpha-mannosidase (290 aa).

Catalysis depends on Asp17, which acts as the Nucleophile. Residue Asn64 is glycosylated (N-linked (GlcNAc...) asparagine).

Belongs to the glycosyl hydrolase 38 family. In terms of assembly, dimer. It depends on Zn(2+) as a cofactor.

The catalysed reaction is Hydrolysis of terminal, non-reducing alpha-D-mannose residues in alpha-D-mannosides.. Inhibited by swainsonine but not by 1-desoxymannojirimycin. Its function is as follows. Liberates mannose from p-nitrophenyl-alpha-D-mannoside. The sequence is that of Alpha-mannosidase from Lablab purpureus (Hyacinth bean).